A 208-amino-acid chain; its full sequence is MKEQNESFVVDFVGGAVGHRFRSGEGRGQALPKAAGFTKGRTPKIVDATAGLGRDAFLLASLGAEVTLIERSPGMHAHLADGISRALEAGGAYAEAASRMTLLQGDSRQLLKELSPEVVVIDPMHPPRHNTALVKKEMRVLRELVGSDPDQVELMEVALAHATKRVVLKWPLRADPMPGIRKPSHQIIGKNTRYDVFMIFGNSLDQQE.

S-adenosyl-L-methionine is bound by residues 54–55 (RD), 70–71 (ER), and D122.

It belongs to the methyltransferase superfamily. RsmJ family.

Its subcellular location is the cytoplasm. The enzyme catalyses guanosine(1516) in 16S rRNA + S-adenosyl-L-methionine = N(2)-methylguanosine(1516) in 16S rRNA + S-adenosyl-L-homocysteine + H(+). Specifically methylates the guanosine in position 1516 of 16S rRNA. In Agrobacterium fabrum (strain C58 / ATCC 33970) (Agrobacterium tumefaciens (strain C58)), this protein is Ribosomal RNA small subunit methyltransferase J.